Consider the following 462-residue polypeptide: Glutamate--tRNA ligase (462 aa).

The 'HIGH' region signature appears at 11–21 (PSPTGFIHLGN). A 'KMSKS' region motif is present at residues 243 to 247 (KMSKR). Lys246 is an ATP binding site.

The protein belongs to the class-I aminoacyl-tRNA synthetase family. Glutamate--tRNA ligase type 1 subfamily. As to quaternary structure, monomer.

It is found in the cytoplasm. It catalyses the reaction tRNA(Glu) + L-glutamate + ATP = L-glutamyl-tRNA(Glu) + AMP + diphosphate. Functionally, catalyzes the attachment of glutamate to tRNA(Glu) in a two-step reaction: glutamate is first activated by ATP to form Glu-AMP and then transferred to the acceptor end of tRNA(Glu). This Albidiferax ferrireducens (strain ATCC BAA-621 / DSM 15236 / T118) (Rhodoferax ferrireducens) protein is Glutamate--tRNA ligase.